The following is a 229-amino-acid chain: Small ribosomal subunit protein uS3 (229 aa).

A KH type-2 domain is found at 39–107 (VRQYLTEKLK…TAQINIAEIR (69 aa)).

It belongs to the universal ribosomal protein uS3 family. In terms of assembly, part of the 30S ribosomal subunit. Forms a tight complex with proteins S10 and S14.

Functionally, binds the lower part of the 30S subunit head. Binds mRNA in the 70S ribosome, positioning it for translation. The polypeptide is Small ribosomal subunit protein uS3 (Shewanella frigidimarina (strain NCIMB 400)).